Consider the following 198-residue polypeptide: Transcription factor LBX2 (198 aa).

3 disordered regions span residues 24–46 (MVPR…SPLC), 63–89 (ALQP…RKSR), and 173–198 (DPGL…QVDD). The segment at residues 85-144 (RRKSRTAFTAQQVLELERRFVFQKYLAPSERDGLATRLGLANAQVVTWFQNRRAKLKRDV) is a DNA-binding region (homeobox).

Its subcellular location is the nucleus. Functionally, transcription factor. The sequence is that of Transcription factor LBX2 (LBX2) from Homo sapiens (Human).